The primary structure comprises 211 residues: FMN-dependent NADH:quinone oxidoreductase 2 (211 aa).

An FMN-binding site is contributed by 17 to 19 (SYS).

The protein belongs to the azoreductase type 1 family. In terms of assembly, homodimer. FMN is required as a cofactor.

The enzyme catalyses 2 a quinone + NADH + H(+) = 2 a 1,4-benzosemiquinone + NAD(+). It carries out the reaction N,N-dimethyl-1,4-phenylenediamine + anthranilate + 2 NAD(+) = 2-(4-dimethylaminophenyl)diazenylbenzoate + 2 NADH + 2 H(+). Its function is as follows. Quinone reductase that provides resistance to thiol-specific stress caused by electrophilic quinones. Also exhibits azoreductase activity. Catalyzes the reductive cleavage of the azo bond in aromatic azo compounds to the corresponding amines. The polypeptide is FMN-dependent NADH:quinone oxidoreductase 2 (Bacillus licheniformis (strain ATCC 14580 / DSM 13 / JCM 2505 / CCUG 7422 / NBRC 12200 / NCIMB 9375 / NCTC 10341 / NRRL NRS-1264 / Gibson 46)).